A 414-amino-acid polypeptide reads, in one-letter code: ORC1-type DNA replication protein 11 (414 aa).

ATP is bound by residues 60-64 (VGKTA), Tyr207, and Arg219.

This sequence belongs to the CDC6/cdc18 family.

Involved in regulation of DNA replication. In Haloarcula marismortui (strain ATCC 43049 / DSM 3752 / JCM 8966 / VKM B-1809) (Halobacterium marismortui), this protein is ORC1-type DNA replication protein 11 (cdc6k).